The chain runs to 160 residues: Epithelial membrane protein 1 (160 aa).

The chain crosses the membrane as a helical span at residues 1–21 (MLVLLAAIFVVHIATCVMLFV). N-linked (GlcNAc...) asparagine glycans are attached at residues asparagine 35 and asparagine 43. Transmembrane regions (helical) follow at residues 67–87 (FMIL…FQLF), 95–115 (FFLS…GASI), and 137–157 (FILA…YLVL).

Belongs to the PMP-22/EMP/MP20 family. In terms of tissue distribution, most abundant in squamous epithelia.

The protein resides in the membrane. The protein is Epithelial membrane protein 1 (EMP1) of Oryctolagus cuniculus (Rabbit).